The chain runs to 306 residues: Bifunctional protein FolD (306 aa).

NADP(+)-binding positions include 164-166 (GRS), Ser189, and Thr230.

This sequence belongs to the tetrahydrofolate dehydrogenase/cyclohydrolase family. In terms of assembly, homodimer.

It catalyses the reaction (6R)-5,10-methylene-5,6,7,8-tetrahydrofolate + NADP(+) = (6R)-5,10-methenyltetrahydrofolate + NADPH. The enzyme catalyses (6R)-5,10-methenyltetrahydrofolate + H2O = (6R)-10-formyltetrahydrofolate + H(+). It functions in the pathway one-carbon metabolism; tetrahydrofolate interconversion. Its function is as follows. Catalyzes the oxidation of 5,10-methylenetetrahydrofolate to 5,10-methenyltetrahydrofolate and then the hydrolysis of 5,10-methenyltetrahydrofolate to 10-formyltetrahydrofolate. This Solibacter usitatus (strain Ellin6076) protein is Bifunctional protein FolD.